Reading from the N-terminus, the 657-residue chain is Katanin p80 WD40 repeat-containing subunit B1 (657 aa).

WD repeat units lie at residues 18–58, 61–100, 103–142, 145–184, 187–226, and 229–269; these read AHSS…CVMS, GHTTPIESLQISAKEELIVAGSQSGSIRVWDLEAAKILRT, GHKANICSLDFHPYGSFVASGSLDTDIKLWDVRRKGCIFK, SHTQAVRCLRFSPDGKWLASAADDHTVKLWDLTAGKVMFE, GHSGPVNVVEFHPSEYLLASGSSDRTIRFWDLEKFHVVSC, and EEAT…DVVV. 2 disordered regions span residues 318–410 and 423–454; these read NNEL…EDEP and VEVQTPLPKQELPETFQRPPIASSTPMPRAEP. A compositionally biased stretch (polar residues) spans 325-345; sequence PTPTGSSLRRSYDRPSTSCSK. The span at 351 to 385 shows a compositional bias: basic and acidic residues; it reads HSSESERRSPSSEEDRDEKESKAEIQNPEDYKEIF.

Belongs to the WD repeat KATNB1 family. As to quaternary structure, interacts with KATNA1. This interaction enhances the microtubule binding and severing activity of KATNA1 and also targets this activity to the centrosome.

The protein localises to the cytoplasm. Its subcellular location is the cytoskeleton. The protein resides in the microtubule organizing center. It is found in the centrosome. It localises to the spindle pole. The protein localises to the spindle. Functionally, participates in a complex which severs microtubules in an ATP-dependent manner. May act to target the enzymatic subunit of this complex to sites of action such as the centrosome. Microtubule severing may promote rapid reorganization of cellular microtubule arrays and the release of microtubules from the centrosome following nucleation. The chain is Katanin p80 WD40 repeat-containing subunit B1 from Gallus gallus (Chicken).